A 118-amino-acid chain; its full sequence is Large ribosomal subunit protein uL18 (118 aa).

It belongs to the universal ribosomal protein uL18 family. Part of the 50S ribosomal subunit; part of the 5S rRNA/L5/L18/L25 subcomplex. Contacts the 5S and 23S rRNAs.

Functionally, this is one of the proteins that bind and probably mediate the attachment of the 5S RNA into the large ribosomal subunit, where it forms part of the central protuberance. In Nitrosospira multiformis (strain ATCC 25196 / NCIMB 11849 / C 71), this protein is Large ribosomal subunit protein uL18.